Reading from the N-terminus, the 747-residue chain is Heterogeneous nuclear ribonucleoprotein U-like protein 2 (747 aa).

In terms of domain architecture, SAP spans 3-37; that stretch reads VKRLKVTELRSELQRRGLDSRGLKVDLAQRLQEAL. Disordered stretches follow at residues 40–242 and 627–666; these read EMLE…EEED and EEAR…GQRR. The span at 73 to 97 shows a compositional bias: acidic residues; it reads GDEEEDEEEEEEDEEALLEDEDEEP. The segment covering 115–125 has biased composition (low complexity); sequence EAAAMEAAAEP. Over residues 137 to 147 the composition is skewed to gly residues; it reads GSGGVNGGEEQ. Residues 148–163 show a composition bias toward basic and acidic residues; sequence GLGKREEDEPEERSGD. Ser161 is modified (phosphoserine). Phosphothreonine is present on Thr165. 5 positions are modified to phosphoserine: Ser168, Ser185, Ser188, Ser226, and Ser228. Over residues 185-223 the composition is skewed to basic and acidic residues; the sequence is SEKSKPAGSDGERRGVKRQRDEKDEHGRAYYEFREEAYH. The B30.2/SPRY domain occupies 226 to 419; sequence SKSPLPPEEE…VELNFGQKEE (194 aa). Over residues 232–242 the composition is skewed to acidic residues; sequence PEEEAKDEEED. Residues 627 to 639 show a composition bias toward basic and acidic residues; that stretch reads EEARKLLPPSEKR. Residues 640–654 are compositionally biased toward basic residues; sequence TNRRNNRNKRNRQNR. Omega-N-methylarginine is present on residues Arg656, Arg684, Arg738, and Arg747.

Binds to MLF1 and retains it in the nucleus.

The protein localises to the nucleus. The sequence is that of Heterogeneous nuclear ribonucleoprotein U-like protein 2 (HNRNPUL2) from Homo sapiens (Human).